A 317-amino-acid polypeptide reads, in one-letter code: Ornithine carbamoyltransferase (317 aa).

Carbamoyl phosphate-binding positions include 57 to 60 (STRT), Gln84, Arg108, and 135 to 138 (HPCQ). L-ornithine is bound by residues Asn166, Asp230, and 234–235 (SM). Carbamoyl phosphate contacts are provided by residues 270 to 271 (CL) and Arg298.

Belongs to the aspartate/ornithine carbamoyltransferase superfamily. OTCase family. Homododecamer.

Its subcellular location is the cytoplasm. The enzyme catalyses carbamoyl phosphate + L-ornithine = L-citrulline + phosphate + H(+). The protein operates within amino-acid biosynthesis; L-arginine biosynthesis; L-arginine from L-ornithine and carbamoyl phosphate: step 1/3. In terms of biological role, reversibly catalyzes the transfer of the carbamoyl group from carbamoyl phosphate (CP) to the N(epsilon) atom of ornithine (ORN) to produce L-citrulline. The protein is Ornithine carbamoyltransferase of Pyrococcus abyssi (strain GE5 / Orsay).